Reading from the N-terminus, the 378-residue chain is MRSLDAARDTCERLHPGLIKALEELPLLEREAEGSPVLDIFRAHGGAGLLVPSAYGGHGADALDAVRVTRALGACSPSLAAAATMHNFTAAMLFALTDRVIPPTDEQKKLLARVAPEGMLLASGWAEGRTQQDILNPSVKATPVDDGFILNGSKKPCSLSRSMDILTASVILPDETGQQSLAVPLIMADSPGISVHPFWESPVLAGSQSNEVRLKDVHVPEKLIIRGTPDDPGRLDDLQTATFVWFELLITSAYVGAASALTELVMERDRGSVTDRAALGIQLESAVGLTEGVARAVRDGVFGEEAVAAALTARFAVQKTLAAISDQAIELLGGIAFIKSPELAYLSSALHPLAFHPPGRTSSSPHLVEYFSGGPLEI.

In terms of assembly, exists in dimeric or trimeric form depending upon buffer conditions. It can form an isobutylamine N-hydroxylase two component enzyme system formed of a flavin reductase component (VlmR) and a monooxygenase component (VlmH).

The catalysed reaction is 2-methylpropan-1-amine + FADH2 + O2 = N-(2-methylpropyl)hydroxylamine + FAD + H2O + 2 H(+). It carries out the reaction 2-methylpropan-1-amine + FMNH2 + O2 = N-(2-methylpropyl)hydroxylamine + FMN + H2O + 2 H(+). Inhibited by 5',5'-dithio-bis(2-nitrobenzoic acid) (DTNB) and 4-(hydroxymercuri)benzoic acid (p-HMB). Its function is as follows. Involved in the biosynthesis of the azoxy antibiotic valanimycin, which has an antitumor activity. Catalyzes the oxidation of isobutylamine to isobutylhydroxylamine via the formation of a flavin 4a-hydroperoxide. Unlike other known N-hydroxylases, isobutylamine N-hydroxylase cannot carry out the reduction of the flavin cofactor and requires the NADPH-flavin oxidoreductase VlmR. Also able to oxidize propan-1-amine, butan-1-amine, butan-2-amine and benzylamine. It has a similar activity with either FMNH(2) or FADH(2). The sequence is that of Isobutylamine N-hydroxylase from Streptomyces viridifaciens.